Here is a 399-residue protein sequence, read N- to C-terminus: Elongation factor Tu (399 aa).

In terms of domain architecture, tr-type G spans 10-209 (KPHVNIGTIG…AVDSYIPTPK (200 aa)). The interval 19 to 26 (GHVDHGKT) is G1. 19 to 26 (GHVDHGKT) contacts GTP. Position 26 (threonine 26) interacts with Mg(2+). Residues 60–64 (GITIA) form a G2 region. Positions 81–84 (DCPG) are G3. Residues 81-85 (DCPGH) and 136-139 (NKTD) each bind GTP. Positions 136-139 (NKTD) are G4. Residues 174-176 (SAL) form a G5 region.

The protein belongs to the TRAFAC class translation factor GTPase superfamily. Classic translation factor GTPase family. EF-Tu/EF-1A subfamily. As to quaternary structure, monomer.

It localises to the cytoplasm. The catalysed reaction is GTP + H2O = GDP + phosphate + H(+). Its function is as follows. GTP hydrolase that promotes the GTP-dependent binding of aminoacyl-tRNA to the A-site of ribosomes during protein biosynthesis. This chain is Elongation factor Tu, found in Campylobacter hominis (strain ATCC BAA-381 / DSM 21671 / CCUG 45161 / LMG 19568 / NCTC 13146 / CH001A).